We begin with the raw amino-acid sequence, 97 residues long: Carboxysome shell protein CsoS1B (97 aa).

The region spanning 8–93 is the BMC domain; that stretch reads ALGMIETRGL…PHKEVEPVLT (86 aa).

The protein belongs to the bacterial microcompartments protein family. CsoS1 subfamily. As to quaternary structure, homohexamer with a small central pore.

The protein localises to the carboxysome. Functionally, one of shell proteins of the carboxysome, a polyhedral inclusion where RuBisCO (ribulose bisphosphate carboxylase, ccbL-ccbS) is sequestered. Assembles into hexamers which make sheets that form the facets of the polyhedral carboxysome. The shell probably limits the diffusion of CO(2) into and out of the carboxysome. In Hydrogenovibrio crunogenus (strain DSM 25203 / XCL-2) (Thiomicrospira crunogena), this protein is Carboxysome shell protein CsoS1B.